Consider the following 71-residue polypeptide: Large ribosomal subunit protein bL31 (71 aa).

Zn(2+)-binding residues include cysteine 16, cysteine 18, cysteine 37, and cysteine 40.

The protein belongs to the bacterial ribosomal protein bL31 family. Type A subfamily. As to quaternary structure, part of the 50S ribosomal subunit. Zn(2+) is required as a cofactor.

In terms of biological role, binds the 23S rRNA. In Pseudomonas entomophila (strain L48), this protein is Large ribosomal subunit protein bL31.